Consider the following 299-residue polypeptide: Acetaldehyde dehydrogenase 6 (299 aa).

Cys125 functions as the Acyl-thioester intermediate in the catalytic mechanism. NAD(+) contacts are provided by residues 156–164 (GAGPGTRAN) and Asn275.

This sequence belongs to the acetaldehyde dehydrogenase family.

It carries out the reaction acetaldehyde + NAD(+) + CoA = acetyl-CoA + NADH + H(+). The polypeptide is Acetaldehyde dehydrogenase 6 (hpdG) (Rhodococcus jostii (strain RHA1)).